Consider the following 221-residue polypeptide: Ribonuclease T (221 aa).

Residues 21-195 enclose the Exonuclease domain; sequence VVIDIESAGF…YDTIQTAYLF (175 aa). The Mg(2+) site is built by Asp24, Glu26, His182, and Asp187. The active-site Proton donor/acceptor is His182.

Belongs to the RNase T family. As to quaternary structure, homodimer. It depends on Mg(2+) as a cofactor.

In terms of biological role, trims short 3' overhangs of a variety of RNA species, leaving a one or two nucleotide 3' overhang. Responsible for the end-turnover of tRNA: specifically removes the terminal AMP residue from uncharged tRNA (tRNA-C-C-A). Also appears to be involved in tRNA biosynthesis. The sequence is that of Ribonuclease T from Buchnera aphidicola subsp. Cinara cedri (strain Cc).